A 258-amino-acid polypeptide reads, in one-letter code: Lysine-rich coiled-coil protein 1 (258 aa).

A disordered region spans residues 142-258 (DNSTSTHQAS…MLWDQSILGF (117 aa)). Residues 150 to 161 (ASHKQIHQKRKR) are compositionally biased toward basic residues. Basic and acidic residues-rich tracts occupy residues 162 to 175 (HPEE…EEWS), 183 to 213 (CKEI…TEKL), and 220 to 232 (KGRD…EERK). Positions 211–248 (EKLKNRKEKKGRDVVSKKEERKRTKKKKEQGQERTEEE) form a coiled coil.

This Pongo abelii (Sumatran orangutan) protein is Lysine-rich coiled-coil protein 1 (KRCC1).